Consider the following 326-residue polypeptide: uncharacterized protein (326 aa).

The next 2 helical transmembrane spans lie at 9 to 29 and 33 to 53; these read WVVL…RWSL and ISIC…ANSY. Residues Asp-120, Asn-148, Tyr-214, Lys-218, and Thr-252 each contribute to the NADP(+) site. Catalysis depends on Tyr-214, which acts as the Proton acceptor. Residue Lys-218 is the Lowers pKa of active site Tyr of the active site.

This sequence belongs to the short-chain dehydrogenases/reductases (SDR) family.

It is found in the mitochondrion membrane. Its function is as follows. Involved in the resistance to DNA-damaging agents. This is an uncharacterized protein from Saccharomyces cerevisiae (strain ATCC 204508 / S288c) (Baker's yeast).